We begin with the raw amino-acid sequence, 198 residues long: MARCKS-related protein (198 aa).

Residues 1–198 (MGSQSSKAPR…DPAPASEQNE (198 aa)) are disordered. The N-myristoyl glycine moiety is linked to residue glycine 2. Residue threonine 14 is modified to Phosphothreonine. Phosphoserine is present on residues serine 22, serine 36, serine 41, and serine 48. Residues 53 to 62 (GTEEAAGATG) show a composition bias toward low complexity. Serine 71 is subject to Phosphoserine. The span at 76–85 (AKGEVPPKET) shows a compositional bias: basic and acidic residues. Threonine 85 carries the post-translational modification Phosphothreonine. Positions 86-98 (PKKKKKFSFKKPF) are enriched in basic residues. The tract at residues 87 to 110 (KKKKKFSFKKPFKLSGLSFKRNRK) is effector domain involved in lipid-binding and calmodulin-binding. 3 positions are modified to phosphoserine; by PKC: serine 93, serine 101, and serine 104. Serine 119 carries the post-translational modification Phosphoserine. Serine 120 carries the post-translational modification Phosphoserine; by MAPK8. Serine 132 carries the phosphoserine modification. Phosphothreonine; by MAPK8 is present on threonine 148. 2 positions are modified to phosphoserine: serine 151 and serine 162. Residues 156 to 167 (AKGAEASAAAKG) show a composition bias toward low complexity. Residue threonine 170 is modified to Phosphothreonine. Threonine 182 is modified (phosphothreonine; by MAPK8).

Belongs to the MARCKS family. Binds to filamentous actin (F-actin), but not to monomeric G-actin, independently of its phosphorylation status. Interacts with calmodulin. Post-translationally, phosphorylated. Phosphorylation at Ser-120 and Thr-182 is non-redundantly catalyzed by MAPK8 in vivo. Phosphorylation at Thr-148 is preferentially catalyzed by MAPK8 in vivo, but this modification can also be catalyzed by other kinases in the absence of MAPK8. May be phosphorylated by protein kinase C, which disrupts the interaction with calmodulin.

The protein resides in the cytoplasm. The protein localises to the cytoskeleton. Its subcellular location is the cell membrane. Controls cell movement by regulating actin cytoskeleton homeostasis and filopodium and lamellipodium formation. When unphosphorylated, induces cell migration. When phosphorylated by MAPK8, induces actin bundles formation and stabilization, thereby reducing actin plasticity, hence restricting cell movement, including neuronal migration. May be involved in coupling the protein kinase C and calmodulin signal transduction systems. The polypeptide is MARCKS-related protein (MARCKSL1) (Bos taurus (Bovine)).